The primary structure comprises 107 residues: MVLKVPTSKVLLVLATLFAVAAMISSWMPQVAASPLAPTEYEQRRMMCSTGLSDVIQKICVSGTVALGDVFPNSFGKRRKRDLQNVTDLCCKSGGCTYRELLQYCKG.

Residues 1–33 form the signal peptide; that stretch reads MVLKVPTSKVLLVLATLFAVAAMISSWMPQVAA. 3 disulfides stabilise this stretch: Cys48–Cys91, Cys60–Cys105, and Cys90–Cys96. A propeptide spans 67–76 (connecting peptide); sequence LGDVFPNSFG.

This sequence belongs to the insulin family. Heterodimer of a B chain and an A chain linked by two disulfide bonds. In terms of tissue distribution, expressed at a low level in the larval gut.

The protein resides in the secreted. Possible ligand of InR/insulin-like receptor. This Drosophila melanogaster (Fruit fly) protein is Insulin-like peptide 6.